The primary structure comprises 450 residues: Biotin carboxylase 1 (450 aa).

One can recognise a Biotin carboxylation domain in the interval 1-447 (MIKKLLIANR…NTKFLETYDV (447 aa)). ATP contacts are provided by residues K116, K158, 164–165 (GG), 200–203 (EKYI), and H208. One can recognise an ATP-grasp domain in the interval 120 to 318 (RETMKQAGVP…LIKEQIKVAS (199 aa)). Position 237 (K237) interacts with hydrogencarbonate. ATP-binding residues include E275 and E289. 3 residues coordinate Mg(2+): E275, E289, and N291. Positions 275, 289, and 291 each coordinate Mn(2+). 3 residues coordinate hydrogencarbonate: R293, V296, and R339. The active site involves R293. A biotin-binding site is contributed by R339.

As to quaternary structure, acetyl-CoA carboxylase is a heterohexamer of biotin carboxyl carrier protein, biotin carboxylase and the two subunits of carboxyl transferase in a 2:2 complex. It depends on Mg(2+) as a cofactor. Mn(2+) serves as cofactor.

The catalysed reaction is N(6)-biotinyl-L-lysyl-[protein] + hydrogencarbonate + ATP = N(6)-carboxybiotinyl-L-lysyl-[protein] + ADP + phosphate + H(+). Its pathway is lipid metabolism; malonyl-CoA biosynthesis; malonyl-CoA from acetyl-CoA: step 1/1. This protein is a component of the acetyl coenzyme A carboxylase complex; first, biotin carboxylase catalyzes the carboxylation of the carrier protein and then the transcarboxylase transfers the carboxyl group to form malonyl-CoA. The sequence is that of Biotin carboxylase 1 (accC1) from Bacillus subtilis (strain 168).